The sequence spans 166 residues: Phosphopantetheine adenylyltransferase (166 aa).

Residue S9 participates in substrate binding. Residues 9-10 (SY) and H17 each bind ATP. The substrate site is built by K41, I75, and K89. ATP-binding positions include 90–92 (GLR), E100, and 124–130 (LEHISSS).

This sequence belongs to the bacterial CoaD family. As to quaternary structure, homohexamer. Requires Mg(2+) as cofactor.

It localises to the cytoplasm. The enzyme catalyses (R)-4'-phosphopantetheine + ATP + H(+) = 3'-dephospho-CoA + diphosphate. Its pathway is cofactor biosynthesis; coenzyme A biosynthesis; CoA from (R)-pantothenate: step 4/5. Functionally, reversibly transfers an adenylyl group from ATP to 4'-phosphopantetheine, yielding dephospho-CoA (dPCoA) and pyrophosphate. The protein is Phosphopantetheine adenylyltransferase of Bifidobacterium longum (strain DJO10A).